The sequence spans 539 residues: MVQGEESSWRMAASTHHERAIPLNQALAYGVQAHASPSVAAAPPASFLDFQPAAAAAAYFGELEEALIHGANAGGVVDPGMIRADVHSKSAAAAATAGYLAARPPTLEIFPSWPMRQQQQLHSGNSQSVGSTTDSSSAQNTMPQMELVSPASIRASSEHQHQQQQPGQEVMMVTTDDYSYKPGLAAASPSFQQQHQLQHHQQQQLHGGGDHDKRKHGSTRKDGKSVDAKTERRLAQNREAARKSRLRKKAYVQNLETSRVRLQQIEQELQRARSQGLFLGGCRAAGDMSSGAAMFDMEYARWLDDDSKRLTDLRGGLQAHLLDTNLGLIVEECMQHYDELFQLKAALARSDVFHLLTGTWATPAERCFLWMGGFRPSDLLKILIQQLDPLTEQQMLGIYSLQQSSEQAEEALAQGLQQLHQSLADTVAAGTLNDGPGVPNYMSLMAIALDKLASLESFYQQADNLRQQTLHQLRRILTTRQAARCFLSIGEYYRRLRALSNLWSSRPRENFIGTESVSPTGTELQPMHNQPQQNQYSGF.

Positions 115–125 (MRQQQQLHSGN) are enriched in polar residues. Disordered stretches follow at residues 115 to 140 (MRQQ…SAQN) and 181 to 246 (KPGL…KSRL). 2 stretches are compositionally biased toward low complexity: residues 126–137 (SQSVGSTTDSSS) and 192–205 (QQQH…QQQL). Residues 219 to 242 (TRKDGKSVDAKTERRLAQNREAAR) are compositionally biased toward basic and acidic residues. The region spanning 227–271 (DAKTERRLAQNREAARKSRLRKKAYVQNLETSRVRLQQIEQELQR) is the bZIP domain. Residues 229–249 (KTERRLAQNREAARKSRLRKK) are basic motif. The segment at 255–269 (LETSRVRLQQIEQEL) is leucine-zipper. In terms of domain architecture, DOG1 spans 292–506 (AAMFDMEYAR…RALSNLWSSR (215 aa)). The interval 513–539 (GTESVSPTGTELQPMHNQPQQNQYSGF) is disordered.

It belongs to the bZIP family. Interacts with NPR1/NH1 and NPR3/NH3.

It is found in the nucleus. In terms of biological role, transcriptional regulator involved in defense response. Acts as a transcriptional activator in vitro. The chain is Transcription factor LG2 from Oryza sativa subsp. japonica (Rice).